Here is a 131-residue protein sequence, read N- to C-terminus: Prefoldin subunit beta (131 aa).

Disordered regions lie at residues 19-41 and 112-131; these read LQETAQQVAQQKQQAETQLRESE and LQGGAGGGPMGPGGPGAGGA. The span at 20–35 shows a compositional bias: low complexity; the sequence is QETAQQVAQQKQQAET. The span at 114–131 shows a compositional bias: gly residues; it reads GGAGGGPMGPGGPGAGGA.

Belongs to the prefoldin subunit beta family. In terms of assembly, heterohexamer of two alpha and four beta subunits.

The protein resides in the cytoplasm. Its function is as follows. Molecular chaperone capable of stabilizing a range of proteins. Seems to fulfill an ATP-independent, HSP70-like function in archaeal de novo protein folding. The chain is Prefoldin subunit beta from Natronomonas pharaonis (strain ATCC 35678 / DSM 2160 / CIP 103997 / JCM 8858 / NBRC 14720 / NCIMB 2260 / Gabara) (Halobacterium pharaonis).